Here is a 1648-residue protein sequence, read N- to C-terminus: Kinesin-like protein KIF14 (1648 aa).

Residues 1 to 27 (MSLHSTHNRNNSGDILDIPSSQNSSSL) form a disordered region. The interval 1 to 356 (MSLHSTHNRN…AGKDPLKVEN (356 aa)) is required for PRC1-binding. Residues Ser-12 and Ser-272 each carry the phosphoserine modification. Thr-277 is subject to Phosphothreonine. Ser-346 is subject to Phosphoserine. The tract at residues 356-737 (NSQVTVAVRV…AAQRNSRNID (382 aa)) is required for microtubule-binding with high affinity. The region spanning 358 to 701 (QVTVAVRVRP…LRYANQARLI (344 aa)) is the Kinesin motor domain. Residue 447 to 454 (GQTGSGKS) participates in ATP binding. Positions 705 to 791 (AKVNEDMNAK…QETKELQKAG (87 aa)) form a coiled coil. The FHA domain occupies 825–891 (TTVGKYKPNS…LRHGDRVILG (67 aa)). The interval 901–1648 (PVEVQKGKRP…ECTPSRIQWV (748 aa)) is required for CIT-binding. Thr-915 carries the phosphothreonine modification. Positions 922-1079 (KDFEFAKNEL…QNRNNRDKTF (158 aa)) form a coiled coil. Ser-937 and Ser-1292 each carry phosphoserine. Coiled-coil stretches lie at residues 1332 to 1348 (TNIARLEDELRQEVKKL) and 1468 to 1500 (ENIFAESKIKSFRRQVQEENFEYQDFKRMVNRA). Positions 1600 to 1648 (NTKEEHQQSKSSGIDGSKNKGVPKRVYELHGSSPAVSSEECTPSRIQWV) are disordered. Polar residues predominate over residues 1633–1648 (PAVSSEECTPSRIQWV).

It belongs to the TRAFAC class myosin-kinesin ATPase superfamily. Kinesin family. In terms of assembly, directly interacts with PRC1 within a complex also containing KIF4A, KIF20A and KIF23; targets to the central spindle. Directly interacts with CIT depending on the activation state of the kinase (stronger interaction with the kinase-dead form); targets to the midbody. Interacts with ARRB2; the interaction is detected in the nucleus upon OR1D2 stimulation. Interacts with AKT1; the interaction is detected in the plasma membrane upon INS stimulation and promotes AKT1 phosphorylation. Interacts with SVIL; at midbody during cytokinesis. Interacts with RADIL (via PDZ domain); recruits RADIL to the microtubule network restricting RADIL from interaction with activated RAP1A.

Its subcellular location is the nucleus. The protein localises to the cytoplasm. It localises to the cytoskeleton. The protein resides in the spindle. It is found in the midbody. Microtubule motor protein that binds to microtubules with high affinity through each tubulin heterodimer and has an ATPase activity. Plays a role in many processes like cell division, cytokinesis and also in cell proliferation and apoptosis. During cytokinesis, targets to central spindle and midbody through its interaction with PRC1 and CIT respectively. Regulates cell growth through regulation of cell cycle progression and cytokinesis. During cell cycle progression acts through SCF-dependent proteasomal ubiquitin-dependent protein catabolic process which controls CDKN1B degradation, resulting in positive regulation of cyclins, including CCNE1, CCND1 and CCNB1. During late neurogenesis, regulates the cerebellar, cerebral cortex and olfactory bulb development through regulation of apoptosis, cell proliferation and cell division. Also is required for chromosome congression and alignment during mitotic cell cycle process. Regulates cell spreading, focal adhesion dynamics, and cell migration through its interaction with RADIL resulting in regulation of RAP1A-mediated inside-out integrin activation by tethering RADIL on microtubules. The protein is Kinesin-like protein KIF14 of Homo sapiens (Human).